Here is a 144-residue protein sequence, read N- to C-terminus: 3-dehydroquinate dehydratase (144 aa).

Catalysis depends on Y24, which acts as the Proton acceptor. 3 residues coordinate substrate: N76, H82, and D89. Catalysis depends on H102, which acts as the Proton donor. Substrate contacts are provided by residues 103–104 (LS) and R113.

This sequence belongs to the type-II 3-dehydroquinase family. In terms of assembly, homododecamer.

The catalysed reaction is 3-dehydroquinate = 3-dehydroshikimate + H2O. It participates in metabolic intermediate biosynthesis; chorismate biosynthesis; chorismate from D-erythrose 4-phosphate and phosphoenolpyruvate: step 3/7. Functionally, catalyzes a trans-dehydration via an enolate intermediate. This chain is 3-dehydroquinate dehydratase, found in Bordetella bronchiseptica (strain ATCC BAA-588 / NCTC 13252 / RB50) (Alcaligenes bronchisepticus).